The primary structure comprises 227 residues: Protein FdhD (227 aa).

210–215 (FARNGK) is a Mo-bis(molybdopterin guanine dinucleotide) binding site.

Belongs to the FdhD family.

It is found in the cytoplasm. Its function is as follows. Required for formate dehydrogenase (FDH) activity. This Methanocaldococcus jannaschii (strain ATCC 43067 / DSM 2661 / JAL-1 / JCM 10045 / NBRC 100440) (Methanococcus jannaschii) protein is Protein FdhD.